The following is a 255-amino-acid chain: 5'-nucleotidase SurE (255 aa).

A divalent metal cation contacts are provided by Asp-8, Asp-9, Ser-40, and Asn-93.

The protein belongs to the SurE nucleotidase family. Requires a divalent metal cation as cofactor.

It localises to the cytoplasm. The catalysed reaction is a ribonucleoside 5'-phosphate + H2O = a ribonucleoside + phosphate. Nucleotidase that shows phosphatase activity on nucleoside 5'-monophosphates. In Rhodopseudomonas palustris (strain BisA53), this protein is 5'-nucleotidase SurE.